A 258-amino-acid polypeptide reads, in one-letter code: Serine/arginine-rich splicing factor x16 (258 aa).

Residues 8-81 enclose the RRM domain; it reads RKVYVGDLGN…RRARVELSTG (74 aa). Disordered regions lie at residues 81–113 and 130–258; these read GKYA…GGRG and CRER…VSRD. A compositionally biased stretch (gly residues) spans 86 to 103; it reads SGGGGGGGGGGGGGGGLG. The span at 104–113 shows a compositional bias: basic and acidic residues; that stretch reads GRDRGGGGRG. The CCHC-type zinc-finger motif lies at 116-132; the sequence is KCYECGGRGHFARHCRE. 2 stretches are compositionally biased toward basic residues: residues 130–141 and 149–166; these read CRERKARQRRRS and STSR…RSRS. Basic and acidic residues-rich tracts occupy residues 180–197 and 210–221; these read NGRD…HERN and RRYEDEDDDRVR. 2 stretches are compositionally biased toward low complexity: residues 231 to 240 and 249 to 258; these read RSASPAVRRG and SSASRSVSRD.

Interacts (via Arg/Ser-rich region) with Alsin2/CG7564, Rbp1 and Doa (via N-terminus). Post-translationally, highly phosphorylated. May be phosphorylated by the serine/threonine-protein kinase Doa.

It localises to the nucleus. In terms of biological role, serine/arginine-rich splicing factor (SR protein) involved in differential exon usage during RNA transcript processing, probably by binding exonic splicing enhancer elements and recruiting components of the splicing machinery. Binds RNA stem-loop structures with consensus sequence 5'-CCGUNUNKNW-3'. Regulator of genes involved in lipid and carbohydrate metabolism, the immune response and the response to xenobiotics. The chain is Serine/arginine-rich splicing factor x16 from Drosophila melanogaster (Fruit fly).